We begin with the raw amino-acid sequence, 437 residues long: Serine carboxypeptidase-like 17 (437 aa).

Positions 1–26 are cleaved as a signal peptide; that stretch reads MGKECYYLSWILKFHLLLVLIQLVDS. Disulfide bonds link C85/C327, C249/C263, and C287/C293. Residue N106 is glycosylated (N-linked (GlcNAc...) asparagine). The active site involves S181. D362 is a catalytic residue. N-linked (GlcNAc...) asparagine glycosylation occurs at N378. H415 is an active-site residue.

This sequence belongs to the peptidase S10 family. As to expression, expressed in seedlings and siliques.

The protein localises to the secreted. Functionally, probable carboxypeptidase. The chain is Serine carboxypeptidase-like 17 (SCPL17) from Arabidopsis thaliana (Mouse-ear cress).